We begin with the raw amino-acid sequence, 611 residues long: Dihydroxy-acid dehydratase (611 aa).

Aspartate 81 lines the Mg(2+) pocket. Cysteine 122 is a [2Fe-2S] cluster binding site. Mg(2+) is bound by residues aspartate 123 and lysine 124. Lysine 124 carries the N6-carboxylysine modification. Cysteine 195 serves as a coordination point for [2Fe-2S] cluster. Glutamate 491 provides a ligand contact to Mg(2+). Serine 517 functions as the Proton acceptor in the catalytic mechanism.

Belongs to the IlvD/Edd family. Homodimer. [2Fe-2S] cluster serves as cofactor. Requires Mg(2+) as cofactor.

The enzyme catalyses (2R)-2,3-dihydroxy-3-methylbutanoate = 3-methyl-2-oxobutanoate + H2O. It carries out the reaction (2R,3R)-2,3-dihydroxy-3-methylpentanoate = (S)-3-methyl-2-oxopentanoate + H2O. The protein operates within amino-acid biosynthesis; L-isoleucine biosynthesis; L-isoleucine from 2-oxobutanoate: step 3/4. Its pathway is amino-acid biosynthesis; L-valine biosynthesis; L-valine from pyruvate: step 3/4. Functions in the biosynthesis of branched-chain amino acids. Catalyzes the dehydration of (2R,3R)-2,3-dihydroxy-3-methylpentanoate (2,3-dihydroxy-3-methylvalerate) into 2-oxo-3-methylpentanoate (2-oxo-3-methylvalerate) and of (2R)-2,3-dihydroxy-3-methylbutanoate (2,3-dihydroxyisovalerate) into 2-oxo-3-methylbutanoate (2-oxoisovalerate), the penultimate precursor to L-isoleucine and L-valine, respectively. This Histophilus somni (strain 129Pt) (Haemophilus somnus) protein is Dihydroxy-acid dehydratase.